The primary structure comprises 221 residues: uncharacterized protein (221 aa).

Residues 1 to 30 (MVPPNPAHQPARRTQPQLQPQSQPRAQPLP) are disordered. The segment covering 12-25 (RRTQPQLQPQSQPR) has biased composition (polar residues). Residues 37-57 (VLCIIVALVLLGLLVGLAILI) traverse the membrane as a helical segment.

The protein resides in the membrane. This is an uncharacterized protein from Arabidopsis thaliana (Mouse-ear cress).